The primary structure comprises 538 residues: Cryptic outer membrane porin BglH (538 aa).

Positions 1–25 (MFRRNLITSAILLMAPLAFSAQSLA) are cleaved as a signal peptide. Positions 52–82 (KDEEKKKYTPATVNRSVSTNDQGYAANPFPT) are disordered. The span at 62–73 (ATVNRSVSTNDQ) shows a compositional bias: polar residues.

The protein belongs to the porin LamB (TC 1.B.3) family. As to quaternary structure, homomonomer; no physical evidence of a homotrimer has been found, however conductance experiments suggest it may be a homotrimer. The monomer probably consists of 18 antiparallel beta-strands.

It is found in the cell outer membrane. Part of a cryptic operon that is poorly expressed in vivo. May be an ancestral sugar porin with a broad carbohydrate specificity; it binds aromatic beta-D-glucosides such as arbutin and salicin, but with low affinity compared to the binding of maltooligosaccharides to the LamB porin. The polypeptide is Cryptic outer membrane porin BglH (bglH) (Escherichia coli (strain K12)).